Consider the following 1161-residue polypeptide: BMP-2-inducible protein kinase (1161 aa).

The segment at 1-20 (MKKFSRMPKSEGGSGGGAAG) is disordered. Serine 14 bears the Phosphoserine mark. The region spanning 51 to 316 (VTLEESLAEG…DIFQVSYFAF (266 aa)) is the Protein kinase domain. Residues 57-65 (LAEGGFSTV) and lysine 79 contribute to the ATP site. Aspartate 180 serves as the catalytic Proton acceptor. Disordered regions lie at residues 358–439 (TDTI…RVLQ), 453–495 (LQHR…HHHL), 610–630 (TNQK…FGED), and 655–832 (ERAS…TQDL). Positions 361–394 (IGPTETSIAPRQRPKANSATTATPSVLTIQSSAT) are enriched in polar residues. Composition is skewed to low complexity over residues 422 to 439 (LLGQ…RVLQ) and 460 to 485 (QQQQ…QQQQ). Polar residues predominate over residues 610-619 (TNQKNISNPP). Serine 689 is modified (phosphoserine). Composition is skewed to polar residues over residues 697–718 (SSIN…SPAS) and 726–735 (KTSVQGQVQK). Serine 742 carries the phosphoserine modification. The span at 755-779 (EEEEQDDEEVLQGEQGDFNDDDTEP) shows a compositional bias: acidic residues. The segment covering 798–813 (EKHSSDSDYEQAKAKY) has biased composition (basic and acidic residues). 2 positions are modified to phosphoserine: serine 817 and serine 818. A Phosphothreonine modification is found at threonine 834. The residue at position 928 (serine 928) is a Phosphoserine. Residues 965 to 1035 (SQQQKVKQRS…RRDSQSSNEF (71 aa)) form a disordered region. Residues 970–984 (VKQRSLQKLSSRQRR) are compositionally biased toward basic residues. The segment covering 1000–1011 (TPTSTKKTLKPT) has biased composition (low complexity). A phosphoserine mark is found at serine 1029, serine 1031, serine 1032, serine 1039, serine 1041, serine 1076, serine 1107, and serine 1111. Residues 1137-1146 (TPHQSQQSQP) show a composition bias toward polar residues. A disordered region spans residues 1137–1161 (TPHQSQQSQPVELDPFGAAPFPSKQ).

Belongs to the protein kinase superfamily. Ser/Thr protein kinase family. In terms of processing, autophosphorylated.

Its subcellular location is the nucleus. The enzyme catalyses L-seryl-[protein] + ATP = O-phospho-L-seryl-[protein] + ADP + H(+). The catalysed reaction is L-threonyl-[protein] + ATP = O-phospho-L-threonyl-[protein] + ADP + H(+). In terms of biological role, may be involved in osteoblast differentiation. The chain is BMP-2-inducible protein kinase (BMP2K) from Homo sapiens (Human).